The primary structure comprises 261 residues: Fructoselysine 6-kinase (261 aa).

This sequence belongs to the carbohydrate kinase PfkB family. In terms of assembly, monomer.

It catalyses the reaction N(6)-(D-fructosyl)-L-lysine + ATP = N(6)-(6-phospho-D-fructosyl)-L-lysine + ADP + H(+). Its pathway is carbohydrate metabolism; fructoselysine degradation; D-glucose 6-phosphate and lysine from fructoselysine: step 1/2. In terms of biological role, catalyzes the ATP-dependent phosphorylation of fructoselysine to fructoselysine 6-phosphate. Functions in a fructoselysine degradation pathway that allows E.coli to grow on fructoselysine or psicoselysine. To a much lesser extenst, is also able to phosphorylate psicoselysine. The polypeptide is Fructoselysine 6-kinase (Escherichia coli (strain K12)).